A 309-amino-acid chain; its full sequence is Ribose-phosphate pyrophosphokinase (309 aa).

Residues 37 to 39 and 96 to 97 contribute to the ATP site; these read DGE and RQ. Mg(2+) contacts are provided by His130 and Asp169. Lys192 is an active-site residue. D-ribose 5-phosphate-binding positions include Arg194, Asp218, and 222–226; that span reads DTAGT.

Belongs to the ribose-phosphate pyrophosphokinase family. Class I subfamily. Homohexamer. Requires Mg(2+) as cofactor.

The protein localises to the cytoplasm. It catalyses the reaction D-ribose 5-phosphate + ATP = 5-phospho-alpha-D-ribose 1-diphosphate + AMP + H(+). It functions in the pathway metabolic intermediate biosynthesis; 5-phospho-alpha-D-ribose 1-diphosphate biosynthesis; 5-phospho-alpha-D-ribose 1-diphosphate from D-ribose 5-phosphate (route I): step 1/1. Its function is as follows. Involved in the biosynthesis of the central metabolite phospho-alpha-D-ribosyl-1-pyrophosphate (PRPP) via the transfer of pyrophosphoryl group from ATP to 1-hydroxyl of ribose-5-phosphate (Rib-5-P). This is Ribose-phosphate pyrophosphokinase from Wolinella succinogenes (strain ATCC 29543 / DSM 1740 / CCUG 13145 / JCM 31913 / LMG 7466 / NCTC 11488 / FDC 602W) (Vibrio succinogenes).